A 533-amino-acid polypeptide reads, in one-letter code: Na(+)/H(+) antiporter NhaB (533 aa).

11 helical membrane-spanning segments follow: residues 10 to 30, 67 to 87, 96 to 116, 131 to 165, 209 to 229, 247 to 267, 310 to 330, 355 to 375, 396 to 416, 454 to 474, and 481 to 501; these read IGNFLGNSPKWYKIAILSFLI, PGGLLAIQAVAIGMTSASQVL, VLLLLVFMVAGIYFMKQLLLF, VSLMFCLASAFLSAFLDALTVIAVIITVAVGFYSI, LLMHAGVGTALGGVCTMVGEP, IRMSPVTVPVLFAGILTCFLV, AFVGVWLIAGLALHLASVGLI, EEALPFTALLAVFFAVVAVII, LVIFYIANGLLSMVSDNVFVG, ATPNGQAAFLFLLTSALAPLI, and MVWMALPYTIVLSIVGVMAIE.

The protein belongs to the NhaB Na(+)/H(+) (TC 2.A.34) antiporter family.

Its subcellular location is the cell inner membrane. The enzyme catalyses 2 Na(+)(in) + 3 H(+)(out) = 2 Na(+)(out) + 3 H(+)(in). In terms of biological role, na(+)/H(+) antiporter that extrudes sodium in exchange for external protons. This Shewanella sp. (strain MR-4) protein is Na(+)/H(+) antiporter NhaB.